Here is a 194-residue protein sequence, read N- to C-terminus: Ubiquitin-conjugating enzyme E2 T (194 aa).

A UBC core domain is found at 2–152 (QRVSRLKREM…AKKWTAEHAI (151 aa)). Cys-86 acts as the Glycyl thioester intermediate in catalysis. Basic and acidic residues-rich tracts occupy residues 158-170 (CVETDGKTPENKN) and 185-194 (NLEHTKKVCL). The disordered stretch occupies residues 158-194 (CVETDGKTPENKNLKTSHKREALSAQENLEHTKKVCL).

This sequence belongs to the ubiquitin-conjugating enzyme family.

It is found in the nucleus. The enzyme catalyses S-ubiquitinyl-[E1 ubiquitin-activating enzyme]-L-cysteine + [E2 ubiquitin-conjugating enzyme]-L-cysteine = [E1 ubiquitin-activating enzyme]-L-cysteine + S-ubiquitinyl-[E2 ubiquitin-conjugating enzyme]-L-cysteine.. It participates in protein modification; protein ubiquitination. Accepts ubiquitin from the E1 complex and catalyzes its covalent attachment to other proteins. Catalyzes monoubiquitination. Involved in DNA repair. In Danio rerio (Zebrafish), this protein is Ubiquitin-conjugating enzyme E2 T (ube2t).